Here is a 178-residue protein sequence, read N- to C-terminus: Extracellular fatty acid-binding protein (178 aa).

An N-terminal signal peptide occupies residues 1 to 20 (MRTLALSLALALLCLLHTEA). Alanine 21 is subject to Blocked amino end (Ala). An enterobactin-binding site is contributed by threonine 43. 1-tetradecanoyl-sn-glycerol 3-phosphate is bound by residues tyrosine 72 and lysine 104. Cysteine 80 and cysteine 173 form a disulfide bridge. Enterobactin-binding residues include lysine 104, arginine 123, and arginine 134. Residue 134–136 (RLY) coordinates 1-tetradecanoyl-sn-glycerol 3-phosphate.

Belongs to the calycin superfamily. Lipocalin family. In terms of assembly, monomer. Post-translationally, does not seem to be glycosylated. As to expression, expressed in egg white (at protein level). Expressed in the magnum of the oviduct (at protein level). Preferentially synthesized in nonproliferating cells.

The protein resides in the secreted. Siderocalin-like lipocalin tightly binding a variety of bacterial ferric siderophores, also binds long-chain unsaturated fatty acids such as linoleic acid, oleic acid, arachidonic acid and, with a lower affinity, long chain saturated fatty acids such as steraic acid. May act as an antibacterial factor, through dual ligand specificity, both as a siderophore-sequestrating molecule and a lysophosphatidic acid (LPA) sensor. In Gallus gallus (Chicken), this protein is Extracellular fatty acid-binding protein (EXFABP).